Consider the following 146-residue polypeptide: Basic phospholipase A2 beta-bungarotoxin A1 chain (146 aa).

Residues 1-19 form the signal peptide; sequence MNPAHLLVLPAVCVSFLGA. A propeptide spanning residues 20 to 27 is cleaved from the precursor; that stretch reads SIIPPQSL. Intrachain disulfides connect C54/C145, C56/C72, C71/C126, C78/C119, C87/C112, and C105/C117. Positions 55, 57, and 59 each coordinate Ca(2+). Residue H75 is part of the active site. D76 provides a ligand contact to Ca(2+). Residue D120 is part of the active site.

It belongs to the phospholipase A2 family. Group I subfamily. D49 sub-subfamily. Heterodimer with beta-bungarotoxin B chain; disulfide-linked. The A chain has phospholipase A2 activity and the B chain shows homology with the basic protease inhibitors. It depends on Ca(2+) as a cofactor. As to expression, expressed by the venom gland.

The protein localises to the secreted. It carries out the reaction a 1,2-diacyl-sn-glycero-3-phosphocholine + H2O = a 1-acyl-sn-glycero-3-phosphocholine + a fatty acid + H(+). In terms of biological role, snake venom phospholipase A2 (PLA2) that inhibits neuromuscular transmission by blocking acetylcholine release from the nerve termini. PLA2 catalyzes the calcium-dependent hydrolysis of the 2-acyl groups in 3-sn-phosphoglycerides. In Bungarus flaviceps flaviceps (Red-headed krait), this protein is Basic phospholipase A2 beta-bungarotoxin A1 chain.